Consider the following 806-residue polypeptide: U3 small nucleolar RNA-associated protein 17 (806 aa).

WD repeat units follow at residues 266-305 (WHANPLNGLSWALNGEYLLSGGQEGVLVLWQMETSHRQFL), 448-489 (RNGL…KTWV), 499-538 (GNLEVVTALKMMTSSNRFITVGTDATLRIWALLPGSSAWK), and 598-635 (PHGGQLENAQFLNAEHCVIISQRRLLVWNVISASVQWT).

Component of the ribosomal small subunit (SSU) processome.

Its subcellular location is the nucleus. The protein resides in the nucleolus. In terms of biological role, involved in nucleolar processing of pre-18S ribosomal RNA. Required for optimal pre-ribosomal RNA transcription by RNA polymerase I together with a subset of U3 proteins required for transcription (t-UTPs). The sequence is that of U3 small nucleolar RNA-associated protein 17 (utp17) from Schizosaccharomyces pombe (strain 972 / ATCC 24843) (Fission yeast).